The sequence spans 279 residues: Protein ABIL4 (279 aa).

2 disordered regions span residues 192–211 (VHNN…PMRF) and 219–241 (LLKR…EPQR). The span at 194-208 (NNINNRTPNKRSNSP) shows a compositional bias: polar residues. A compositionally biased stretch (low complexity) spans 219–228 (LLKRSSSPSQ).

Belongs to the ABI family. In terms of assembly, binds SCAR.

Its subcellular location is the cytoplasm. The protein resides in the cytoskeleton. Functionally, involved in regulation of actin and microtubule organization. Part of a WAVE complex that activates the Arp2/3 complex. The sequence is that of Protein ABIL4 (ABIL4) from Arabidopsis thaliana (Mouse-ear cress).